The primary structure comprises 517 residues: Crotonobetaine/carnitine--CoA ligase (517 aa).

This sequence belongs to the ATP-dependent AMP-binding enzyme family.

The enzyme catalyses 4-(trimethylamino)butanoate + ATP + CoA = 4-(trimethylamino)butanoyl-CoA + AMP + diphosphate. It carries out the reaction crotonobetaine + ATP + CoA = crotonobetainyl-CoA + AMP + diphosphate. The catalysed reaction is (R)-carnitine + ATP + CoA = (R)-carnitinyl-CoA + AMP + diphosphate. Its pathway is amine and polyamine metabolism; carnitine metabolism. Catalyzes the transfer of CoA to carnitine, generating the initial carnitinyl-CoA needed for the CaiB reaction cycle. Also has activity toward crotonobetaine and gamma-butyrobetaine. This chain is Crotonobetaine/carnitine--CoA ligase, found in Escherichia coli O7:K1 (strain IAI39 / ExPEC).